A 163-amino-acid polypeptide reads, in one-letter code: 2-C-methyl-D-erythritol 2,4-cyclodiphosphate synthase (163 aa).

A divalent metal cation-binding residues include D9 and H11. 4-CDP-2-C-methyl-D-erythritol 2-phosphate is bound by residues 9 to 11 (DVH) and 36 to 37 (HS). A divalent metal cation is bound at residue H44. Residues 58–60 (DIG), 63–67 (FPDDD), 134–137 (TTSE), F141, and R144 each bind 4-CDP-2-C-methyl-D-erythritol 2-phosphate.

This sequence belongs to the IspF family. In terms of assembly, homotrimer. A divalent metal cation serves as cofactor.

It carries out the reaction 4-CDP-2-C-methyl-D-erythritol 2-phosphate = 2-C-methyl-D-erythritol 2,4-cyclic diphosphate + CMP. It participates in isoprenoid biosynthesis; isopentenyl diphosphate biosynthesis via DXP pathway; isopentenyl diphosphate from 1-deoxy-D-xylulose 5-phosphate: step 4/6. Involved in the biosynthesis of isopentenyl diphosphate (IPP) and dimethylallyl diphosphate (DMAPP), two major building blocks of isoprenoid compounds. Catalyzes the conversion of 4-diphosphocytidyl-2-C-methyl-D-erythritol 2-phosphate (CDP-ME2P) to 2-C-methyl-D-erythritol 2,4-cyclodiphosphate (ME-CPP) with a corresponding release of cytidine 5-monophosphate (CMP). The chain is 2-C-methyl-D-erythritol 2,4-cyclodiphosphate synthase from Halorhodospira halophila (strain DSM 244 / SL1) (Ectothiorhodospira halophila (strain DSM 244 / SL1)).